The following is a 188-amino-acid chain: Ion-translocating oxidoreductase complex subunit B (188 aa).

The interval M1–A26 is hydrophobic. A 4Fe-4S domain is found at Q32–L90. The [4Fe-4S] cluster site is built by C49, C52, C57, C73, C113, C116, C119, C123, C143, C146, C149, and C153. 2 consecutive 4Fe-4S ferredoxin-type domains span residues R104 to R133 and L134 to T163.

Belongs to the 4Fe4S bacterial-type ferredoxin family. RnfB subfamily. In terms of assembly, the complex is composed of six subunits: RnfA, RnfB, RnfC, RnfD, RnfE and RnfG. [4Fe-4S] cluster is required as a cofactor.

The protein localises to the cell inner membrane. Functionally, part of a membrane-bound complex that couples electron transfer with translocation of ions across the membrane. This is Ion-translocating oxidoreductase complex subunit B from Pseudomonas aeruginosa (strain UCBPP-PA14).